We begin with the raw amino-acid sequence, 575 residues long: Malto-oligosyltrehalose trehalohydrolase (575 aa).

248-253 (RLDAVH) serves as a coordination point for substrate. Catalysis depends on aspartate 250, which acts as the Nucleophile. The Proton donor role is filled by glutamate 287. Substrate is bound by residues 312–316 (DDVHH) and 381–386 (HDQVGN).

This sequence belongs to the glycosyl hydrolase 13 family.

It is found in the cytoplasm. The catalysed reaction is hydrolysis of (1-&gt;4)-alpha-D-glucosidic linkage in 4-alpha-D-[(1-&gt;4)-alpha-D-glucanosyl]n trehalose to yield trehalose and (1-&gt;4)-alpha-D-glucan.. The protein operates within glycan biosynthesis; trehalose biosynthesis. This is Malto-oligosyltrehalose trehalohydrolase (treZ) from Arthrobacter ramosus.